We begin with the raw amino-acid sequence, 319 residues long: GTP 3',8-cyclase (319 aa).

The 216-residue stretch at 4–219 (KHGRKINYLR…SKHSDLIPVE (216 aa)) folds into the Radical SAM core domain. Residue arginine 13 participates in GTP binding. [4Fe-4S] cluster is bound by residues cysteine 20 and cysteine 24. Tyrosine 26 is a binding site for S-adenosyl-L-methionine. Position 27 (cysteine 27) interacts with [4Fe-4S] cluster. A GTP-binding site is contributed by arginine 63. Glycine 67 is a binding site for S-adenosyl-L-methionine. Threonine 94 serves as a coordination point for GTP. Position 118 (serine 118) interacts with S-adenosyl-L-methionine. Lysine 155 serves as a coordination point for GTP. Methionine 189 contributes to the S-adenosyl-L-methionine binding site. 2 residues coordinate [4Fe-4S] cluster: cysteine 249 and cysteine 252. 254 to 256 (RVR) contributes to the GTP binding site. Residue cysteine 266 coordinates [4Fe-4S] cluster.

Belongs to the radical SAM superfamily. MoaA family. Monomer and homodimer. It depends on [4Fe-4S] cluster as a cofactor.

It catalyses the reaction GTP + AH2 + S-adenosyl-L-methionine = (8S)-3',8-cyclo-7,8-dihydroguanosine 5'-triphosphate + 5'-deoxyadenosine + L-methionine + A + H(+). The protein operates within cofactor biosynthesis; molybdopterin biosynthesis. Its function is as follows. Catalyzes the cyclization of GTP to (8S)-3',8-cyclo-7,8-dihydroguanosine 5'-triphosphate. The chain is GTP 3',8-cyclase from Clostridium botulinum (strain Okra / Type B1).